The chain runs to 288 residues: Proline iminopeptidase (288 aa).

Positions 27–274 (PVIVLHGGPG…SAHMPYIEEP (248 aa)) constitute an AB hydrolase-1 domain. S101 serves as the catalytic Nucleophile. The active site involves D240. H267 acts as the Proton donor in catalysis.

This sequence belongs to the peptidase S33 family. As to quaternary structure, monomer.

The protein resides in the cytoplasm. It catalyses the reaction Release of N-terminal proline from a peptide.. With respect to regulation, completely inhibited by p-chloromercuribenzoate (PCMB) and heavy metal salts. Partially inhibited by proline and proline derivatives with proline as the amino terminus. Enzyme inactivated by PCMB is reactivated by incubation with 2-mercaptoethanol. Releases the N-terminal proline from various substrates including at least dipeptides Pro-Pro, Pro-Gln, Pro-Trp and Pro-Tyr. Also acts on amides (Pro-beta NA) and oligopeptides including Pro-Leu-GlyNH2, Pro-Leu-Gly, Pro-Phe-Gly-Lys, Pro-Pro-Ala-OBut and Pro-Pro-Gly-(Pro-Pro-Gly)(4). Higher activity toward small peptides (up to three residues), but very low activity for longer peptides. Has no activity against p-nitrophenyl acetate, poly_L-proline, Met-Pro or amino acyl amides other than Pro-betaNA (Pyr-betaNA, Phe-betaNA, Cys-betaNA, Met-betaNA, Leu-betaNA, Ala-betaNA and Z-Gly-Pro-betaNA). The sequence is that of Proline iminopeptidase (pip) from Heyndrickxia coagulans (Weizmannia coagulans).